The chain runs to 164 residues: Cell division protein SepF (164 aa).

The disordered stretch occupies residues 29-57; the sequence is INKGRGASQQEYDEYYEDSTPTVTQKEDP.

It belongs to the SepF family. As to quaternary structure, homodimer. Interacts with FtsZ.

Its subcellular location is the cytoplasm. Functionally, cell division protein that is part of the divisome complex and is recruited early to the Z-ring. Probably stimulates Z-ring formation, perhaps through the cross-linking of FtsZ protofilaments. Its function overlaps with FtsA. This is Cell division protein SepF from Exiguobacterium sibiricum (strain DSM 17290 / CCUG 55495 / CIP 109462 / JCM 13490 / 255-15).